The following is a 45-amino-acid chain: Photosystem II reaction center protein K (45 aa).

Positions 1 to 8 (MEAALLLA) are excised as a propeptide. Residues 24 to 44 (LPVIPVFFLLLAFVWQAAVGF) form a helical membrane-spanning segment.

It belongs to the PsbK family. PSII is composed of 1 copy each of membrane proteins PsbA, PsbB, PsbC, PsbD, PsbE, PsbF, PsbH, PsbI, PsbJ, PsbK, PsbL, PsbM, PsbT, PsbX, PsbY, PsbZ, Psb30/Ycf12, peripheral proteins PsbO, CyanoQ (PsbQ), PsbU, PsbV and a large number of cofactors. It forms dimeric complexes.

The protein resides in the cellular thylakoid membrane. Its function is as follows. One of the components of the core complex of photosystem II (PSII). PSII is a light-driven water:plastoquinone oxidoreductase that uses light energy to abstract electrons from H(2)O, generating O(2) and a proton gradient subsequently used for ATP formation. It consists of a core antenna complex that captures photons, and an electron transfer chain that converts photonic excitation into a charge separation. The protein is Photosystem II reaction center protein K of Synechococcus elongatus (strain ATCC 33912 / PCC 7942 / FACHB-805) (Anacystis nidulans R2).